A 492-amino-acid chain; its full sequence is Catalase isozyme 2 (492 aa).

Active-site residues include histidine 65 and asparagine 138. Tyrosine 347 lines the heme pocket.

This sequence belongs to the catalase family. In terms of assembly, homotetramer. Requires heme as cofactor. As to expression, high levels in green cotyledons, mature leaf, stem and green hypocotyl.

The protein resides in the peroxisome. It catalyses the reaction 2 H2O2 = O2 + 2 H2O. Occurs in almost all aerobically respiring organisms and serves to protect cells from the toxic effects of hydrogen peroxide. The polypeptide is Catalase isozyme 2 (CAT2) (Cucurbita pepo (Vegetable marrow)).